The sequence spans 180 residues: Lysine-specific demethylase 5C (180 aa).

The segment at 116-159 is disordered; sequence PEESLAYSSDAGEGAGHIPKVQGLLENGDSVTSPEKVATEEGSG. Serine 148 is subject to Phosphoserine.

The protein belongs to the JARID1 histone demethylase family. As to quaternary structure, part of two distinct complexes, one containing E2F6, and the other containing REST. Interacts with ZMYND8. Fe(2+) serves as cofactor.

The protein resides in the nucleus. It carries out the reaction N(6),N(6),N(6)-trimethyl-L-lysyl(4)-[histone H3] + 3 2-oxoglutarate + 3 O2 = L-lysyl(4)-[histone H3] + 3 formaldehyde + 3 succinate + 3 CO2. Its function is as follows. Histone demethylase that specifically demethylates 'Lys-4' of histone H3, thereby playing a central role in histone code. Does not demethylate histone H3 'Lys-9', H3 'Lys-27', H3 'Lys-36', H3 'Lys-79' or H4 'Lys-20'. Demethylates trimethylated and dimethylated but not monomethylated H3 'Lys-4'. Participates in transcriptional repression of neuronal genes by recruiting histone deacetylases and REST at neuron-restrictive silencer elements. Represses the CLOCK-BMAL1 heterodimer-mediated transcriptional activation of the core clock component PER2. This Cricetulus griseus (Chinese hamster) protein is Lysine-specific demethylase 5C (KDM5C).